Consider the following 89-residue polypeptide: MAKKSKIAKFQKQQKLVEQYAELRRELKEKGDYEALRKLPKDSNPNRLKNRDLIDGRPHAYMRKFGMSRINFRNLAYKGQIPGIKKASW.

This sequence belongs to the universal ribosomal protein uS14 family. In terms of assembly, part of the 30S ribosomal subunit. Contacts proteins S3 and S10.

In terms of biological role, binds 16S rRNA, required for the assembly of 30S particles and may also be responsible for determining the conformation of the 16S rRNA at the A site. In Streptococcus agalactiae serotype Ia (strain ATCC 27591 / A909 / CDC SS700), this protein is Small ribosomal subunit protein uS14A.